Reading from the N-terminus, the 101-residue chain is uncharacterized protein (101 aa).

Positions 1-25 (MRKKRLLSRISFSSLFLLCGTLLSA) are cleaved as a signal peptide. A lipid anchor (N-palmitoyl cysteine) is attached at cysteine 26. A lipid anchor (S-diacylglycerol cysteine) is attached at cysteine 26.

Belongs to the MG439/MG440 family.

It localises to the cell membrane. This is an uncharacterized protein from Mycoplasma pneumoniae (strain ATCC 29342 / M129 / Subtype 1) (Mycoplasmoides pneumoniae).